Consider the following 69-residue polypeptide: MNFTKLFVVFAVVLVAFAGQSEAGWRKRVFKPVEKFGQRVRDAGVQGIAIAQQGANVLATARGGPPQQG.

A signal peptide spans 1 to 23; it reads MNFTKLFVVFAVVLVAFAGQSEA. A Glutamine amide modification is found at Gln-68.

As to expression, following bacterial infection, expressed in fat body, trachea and muscle.

The protein resides in the secreted. Antimicrobial peptide active against Gram-negative bacteria E.coli KCCM 11234 (MIC&lt;=1.03 uM), E.aerogenes KCCM 12177 (MIC&lt;=2.07 uM) and P.aeruginosa KCCM 11328 (MIC&lt;=2.07 uM). Not active against various Gram-positive bacteria at concentrations up to 4.14 uM. This Hermetia illucens (Black soldier fly) protein is Cecropin-like peptide 1.